A 150-amino-acid polypeptide reads, in one-letter code: D-aminoacyl-tRNA deacylase (150 aa).

Residues 138 to 139 (GP) carry the Gly-cisPro motif, important for rejection of L-amino acids motif.

The protein belongs to the DTD family. In terms of assembly, homodimer.

The protein resides in the cytoplasm. The enzyme catalyses glycyl-tRNA(Ala) + H2O = tRNA(Ala) + glycine + H(+). It carries out the reaction a D-aminoacyl-tRNA + H2O = a tRNA + a D-alpha-amino acid + H(+). Functionally, an aminoacyl-tRNA editing enzyme that deacylates mischarged D-aminoacyl-tRNAs. Also deacylates mischarged glycyl-tRNA(Ala), protecting cells against glycine mischarging by AlaRS. Acts via tRNA-based rather than protein-based catalysis; rejects L-amino acids rather than detecting D-amino acids in the active site. By recycling D-aminoacyl-tRNA to D-amino acids and free tRNA molecules, this enzyme counteracts the toxicity associated with the formation of D-aminoacyl-tRNA entities in vivo and helps enforce protein L-homochirality. The protein is D-aminoacyl-tRNA deacylase of Thermosipho melanesiensis (strain DSM 12029 / CIP 104789 / BI429).